The sequence spans 219 residues: Endo-type membrane-bound lytic murein transglycosylase A-like protein (219 aa).

The protein belongs to the transglycosylase Slt family.

It carries out the reaction Endolytic cleavage of the (1-&gt;4)-beta-glycosidic linkage between N-acetylmuramic acid (MurNAc) and N-acetylglucosamine (GlcNAc) residues in peptidoglycan with concomitant formation of a 1,6-anhydrobond in the MurNAc residue.. Functionally, murein-degrading enzyme. May play a role in recycling of muropeptides during cell elongation and/or cell division (Potential). The chain is Endo-type membrane-bound lytic murein transglycosylase A-like protein from Shigella flexneri.